Reading from the N-terminus, the 295-residue chain is Acetylglutamate kinase (295 aa).

Residues 66–67, arginine 88, and asparagine 193 each bind substrate; that span reads GG.

Belongs to the acetylglutamate kinase family. ArgB subfamily.

Its subcellular location is the cytoplasm. The catalysed reaction is N-acetyl-L-glutamate + ATP = N-acetyl-L-glutamyl 5-phosphate + ADP. It participates in amino-acid biosynthesis; L-arginine biosynthesis; N(2)-acetyl-L-ornithine from L-glutamate: step 2/4. Its function is as follows. Catalyzes the ATP-dependent phosphorylation of N-acetyl-L-glutamate. This is Acetylglutamate kinase from Rhizobium leguminosarum bv. trifolii (strain WSM2304).